A 1295-amino-acid polypeptide reads, in one-letter code: Phosphoribosylformylglycinamidine synthase (1295 aa).

Residues 302–327 are disordered; the sequence is SPWPGASTGSGGEIRDEGATGRGAKP. Residues 306-317 and A677 contribute to the ATP site; that span reads GASTGSGGEIRD. The Mg(2+) site is built by D678, E717, N721, and D884. S886 serves as a coordination point for ATP. Residues 1042–1295 enclose the Glutamine amidotransferase type-1 domain; it reads VAVLREQGVN…IFRNARKQLG (254 aa). C1135 functions as the Nucleophile in the catalytic mechanism. Active-site residues include H1260 and E1262.

In the N-terminal section; belongs to the FGAMS family. In terms of assembly, monomer.

The protein localises to the cytoplasm. It catalyses the reaction N(2)-formyl-N(1)-(5-phospho-beta-D-ribosyl)glycinamide + L-glutamine + ATP + H2O = 2-formamido-N(1)-(5-O-phospho-beta-D-ribosyl)acetamidine + L-glutamate + ADP + phosphate + H(+). It participates in purine metabolism; IMP biosynthesis via de novo pathway; 5-amino-1-(5-phospho-D-ribosyl)imidazole from N(2)-formyl-N(1)-(5-phospho-D-ribosyl)glycinamide: step 1/2. Functionally, phosphoribosylformylglycinamidine synthase involved in the purines biosynthetic pathway. Catalyzes the ATP-dependent conversion of formylglycinamide ribonucleotide (FGAR) and glutamine to yield formylglycinamidine ribonucleotide (FGAM) and glutamate. The sequence is that of Phosphoribosylformylglycinamidine synthase from Photorhabdus laumondii subsp. laumondii (strain DSM 15139 / CIP 105565 / TT01) (Photorhabdus luminescens subsp. laumondii).